Here is a 413-residue protein sequence, read N- to C-terminus: uncharacterized protein (413 aa).

The Response regulatory domain maps to 2 to 129 (RILIVDDENT…KTTWKLRLME (128 aa)). D54 is modified (4-aspartylphosphate).

This is an uncharacterized protein from Sinorhizobium fredii (strain NBRC 101917 / NGR234).